The primary structure comprises 297 residues: Light-independent protochlorophyllide reductase iron-sulfur ATP-binding protein (297 aa).

ATP is bound by residues 41 to 46 (GIGKST) and lysine 70. Position 45 (serine 45) interacts with Mg(2+). 2 residues coordinate [4Fe-4S] cluster: cysteine 126 and cysteine 160. Residues 211–212 (NR) and 235–237 (PDL) each bind ATP.

Belongs to the NifH/BchL/ChlL family. As to quaternary structure, homodimer. Protochlorophyllide reductase is composed of three subunits; BchL, BchN and BchB. Requires [4Fe-4S] cluster as cofactor.

The enzyme catalyses chlorophyllide a + oxidized 2[4Fe-4S]-[ferredoxin] + 2 ADP + 2 phosphate = protochlorophyllide a + reduced 2[4Fe-4S]-[ferredoxin] + 2 ATP + 2 H2O. The protein operates within porphyrin-containing compound metabolism; bacteriochlorophyll biosynthesis (light-independent). Functionally, component of the dark-operative protochlorophyllide reductase (DPOR) that uses Mg-ATP and reduced ferredoxin to reduce ring D of protochlorophyllide (Pchlide) to form chlorophyllide a (Chlide). This reaction is light-independent. The L component serves as a unique electron donor to the NB-component of the complex, and binds Mg-ATP. The polypeptide is Light-independent protochlorophyllide reductase iron-sulfur ATP-binding protein (Methylorubrum extorquens (strain CM4 / NCIMB 13688) (Methylobacterium extorquens)).